A 212-amino-acid polypeptide reads, in one-letter code: Probable GTP-binding protein EngB (212 aa).

The region spanning 38-210 is the EngB-type G domain; that stretch reads SLPEIAFVGK…KASLAKCIKP (173 aa). GTP contacts are provided by residues 46 to 53, 73 to 77, 91 to 94, 158 to 161, and 189 to 191; these read GKSNVGKS, GRTRQ, DLPG, TKSD, and VSS. Positions 53 and 75 each coordinate Mg(2+).

This sequence belongs to the TRAFAC class TrmE-Era-EngA-EngB-Septin-like GTPase superfamily. EngB GTPase family. Requires Mg(2+) as cofactor.

Necessary for normal cell division and for the maintenance of normal septation. In Rickettsia felis (strain ATCC VR-1525 / URRWXCal2) (Rickettsia azadi), this protein is Probable GTP-binding protein EngB.